Here is a 637-residue protein sequence, read N- to C-terminus: 1-deoxy-D-xylulose-5-phosphate synthase 1 (637 aa).

Thiamine diphosphate-binding positions include His74 and 115 to 117; that span reads GHS. Position 146 (Asp146) interacts with Mg(2+). Residues 147 to 148, Asn175, Tyr286, and Glu368 contribute to the thiamine diphosphate site; that span reads GS. Mg(2+) is bound at residue Asn175.

The protein belongs to the transketolase family. DXPS subfamily. Homodimer. It depends on Mg(2+) as a cofactor. The cofactor is thiamine diphosphate.

The enzyme catalyses D-glyceraldehyde 3-phosphate + pyruvate + H(+) = 1-deoxy-D-xylulose 5-phosphate + CO2. It participates in metabolic intermediate biosynthesis; 1-deoxy-D-xylulose 5-phosphate biosynthesis; 1-deoxy-D-xylulose 5-phosphate from D-glyceraldehyde 3-phosphate and pyruvate: step 1/1. Its function is as follows. Catalyzes the acyloin condensation reaction between C atoms 2 and 3 of pyruvate and glyceraldehyde 3-phosphate to yield 1-deoxy-D-xylulose-5-phosphate (DXP). The sequence is that of 1-deoxy-D-xylulose-5-phosphate synthase 1 from Geobacter sulfurreducens (strain ATCC 51573 / DSM 12127 / PCA).